A 354-amino-acid polypeptide reads, in one-letter code: UDP-3-O-acylglucosamine N-acyltransferase (354 aa).

His-250 acts as the Proton acceptor in catalysis.

The protein belongs to the transferase hexapeptide repeat family. LpxD subfamily. In terms of assembly, homotrimer.

It carries out the reaction a UDP-3-O-[(3R)-3-hydroxyacyl]-alpha-D-glucosamine + a (3R)-hydroxyacyl-[ACP] = a UDP-2-N,3-O-bis[(3R)-3-hydroxyacyl]-alpha-D-glucosamine + holo-[ACP] + H(+). Its pathway is bacterial outer membrane biogenesis; LPS lipid A biosynthesis. In terms of biological role, catalyzes the N-acylation of UDP-3-O-acylglucosamine using 3-hydroxyacyl-ACP as the acyl donor. Is involved in the biosynthesis of lipid A, a phosphorylated glycolipid that anchors the lipopolysaccharide to the outer membrane of the cell. The protein is UDP-3-O-acylglucosamine N-acyltransferase of Methylococcus capsulatus (strain ATCC 33009 / NCIMB 11132 / Bath).